The following is a 471-amino-acid chain: Pneumolysin (471 aa).

The next 4 membrane-spanning stretches (beta stranded) occupy residues 158–171 (MEQL…DFEK), 178–187 (IDFNSVHSGE), 256–265 (SDEVEAAFEA), and 273–285 (APQT…LDNT). Positions 427–437 (ECTGLAWEWWR) match the Conserved undecapeptide motif. The short motif at 459-460 (TL) is the Cholesterol binding element.

Belongs to the cholesterol-dependent cytolysin family. In terms of assembly, elongated monomers align along their lengths, indicating intersubunit contacts and suggesting the prepore structure. Modeling based on cryo-EM shows a homooligomeric pore complex containing 38-44 subunits; when inserted in the host membrane. The size of isolated pores is detergent-dependent; in amphipol A8-35 homogenous rings form with 42 subunits.

The protein localises to the secreted. It is found in the host cell membrane. Erythrocytes hemolysis is inhibited by cholesterol. In terms of biological role, a cholesterol-dependent toxin that causes cytolysis by forming pores in cholesterol-containing host membranes. After binding to target membranes, the protein undergoes a major conformation change, leading to its insertion in the host membrane and formation of an oligomeric pore complex. Cholesterol is required for binding to host membranes, membrane insertion and pore formation; cholesterol binding is mediated by a Thr-Leu pair in the C-terminus. Can be reversibly inactivated by oxidation. The polypeptide is Pneumolysin (ply) (Streptococcus pneumoniae serotype 2 (strain D39 / NCTC 7466)).